The chain runs to 302 residues: Citrate lyase subunit beta (302 aa).

Residues Arg76 and Glu139 each coordinate substrate. 2 residues coordinate Mg(2+): Glu139 and Asp166.

It belongs to the HpcH/HpaI aldolase family. Citrate lyase beta subunit subfamily. Oligomer with a subunit composition of (alpha,beta,gamma)6. The cofactor is Mg(2+).

The protein localises to the cytoplasm. It carries out the reaction citrate = oxaloacetate + acetate. The catalysed reaction is (3S)-citryl-CoA = oxaloacetate + acetyl-CoA. In terms of biological role, represents a citryl-ACP lyase. In Escherichia coli O6:H1 (strain CFT073 / ATCC 700928 / UPEC), this protein is Citrate lyase subunit beta (citE).